The primary structure comprises 477 residues: Glycogen synthase (477 aa).

Residue Lys15 coordinates ADP-alpha-D-glucose.

This sequence belongs to the glycosyltransferase 1 family. Bacterial/plant glycogen synthase subfamily.

It carries out the reaction [(1-&gt;4)-alpha-D-glucosyl](n) + ADP-alpha-D-glucose = [(1-&gt;4)-alpha-D-glucosyl](n+1) + ADP + H(+). It functions in the pathway glycan biosynthesis; glycogen biosynthesis. Its function is as follows. Synthesizes alpha-1,4-glucan chains using ADP-glucose. This Clostridium acetobutylicum (strain ATCC 824 / DSM 792 / JCM 1419 / IAM 19013 / LMG 5710 / NBRC 13948 / NRRL B-527 / VKM B-1787 / 2291 / W) protein is Glycogen synthase.